A 95-amino-acid polypeptide reads, in one-letter code: Membrane protein insertion and folding monitor (95 aa).

The helical transmembrane segment at 12 to 32 (LFLVDFFTIILPALTAIGIAF) threads the bilayer. Residues 86–89 (DEED) are crucial for elongation arrest.

It localises to the cell membrane. Functionally, sensor protein that up-regulates translation of the secondary membrane protein insertase (MisCB/YqjG) when activity of the primary membrane protein insertase (MisCA/SpoIIIJ) is limited. Acts as a ribosome-nascent chain complex. When the primary membrane protein insertase activity or level is reduced, the membrane insertion of MifM is impaired, which induces arrest of MifM translation and unfolding of the mRNA hairpin. Unfolding leads to translation of the downstream gene, which encodes the secondary membrane protein insertase MisCB/YqjG. Translation arrest of MifM is mediated by interaction of its C-terminal domain with the ribosomal polypeptide exit tunnel. Undergoes multisite stalling, which may allow a sufficient duration of ribosomal stalling and consequently sufficient levels of MisCB/YqjG. The chain is Membrane protein insertion and folding monitor (mifM) from Bacillus subtilis (strain 168).